Here is a 283-residue protein sequence, read N- to C-terminus: N-terminal Xaa-Pro-Lys N-methyltransferase 2 (283 aa).

Residues G124, R129, D146, L174–Q175, Q190, and H195 contribute to the S-adenosyl-L-methionine site.

Belongs to the methyltransferase superfamily. NTM1 family.

It localises to the nucleus. The catalysed reaction is N-terminal L-alanyl-L-prolyl-L-lysyl-[protein] + S-adenosyl-L-methionine = N-terminal N-methyl-L-alanyl-L-prolyl-L-lysyl-[protein] + S-adenosyl-L-homocysteine + H(+). It catalyses the reaction N-terminal L-prolyl-L-prolyl-L-lysyl-[protein] + S-adenosyl-L-methionine = N-terminal N-methyl-L-prolyl-L-prolyl-L-lysyl-[protein] + S-adenosyl-L-homocysteine + H(+). The enzyme catalyses N-terminal L-seryl-L-prolyl-L-lysyl-[protein] + S-adenosyl-L-methionine = N-terminal N-methyl-L-seryl-L-prolyl-L-lysyl-[protein] + S-adenosyl-L-homocysteine + H(+). Its function is as follows. Alpha N-methyltransferase that methylates the N-terminus of target proteins containing the N-terminal motif [Ala/Pro/Ser]-Pro-Lys when the initiator Met is cleaved. Specifically catalyzes monomethylation of exposed alpha-amino group of Ala or Ser residue in the [Ala/Ser]-Pro-Lys motif and Pro in the Pro-Pro-Lys motif. Predominantly functions as a mono-methyltransferase but is also able to di-/tri-methylate the GPKRIA peptide and di-methylate the PPKRIA peptide (in vitro). May activate NTMT1 by priming its substrates for trimethylation. The polypeptide is N-terminal Xaa-Pro-Lys N-methyltransferase 2 (Homo sapiens (Human)).